Reading from the N-terminus, the 267-residue chain is Geranylgeranylglyceryl phosphate synthase (267 aa).

The Mg(2+) site is built by D23 and S52. Sn-glycerol 1-phosphate contacts are provided by residues 173-179, 205-206, and 227-228; these read YLEAGSG, GG, and GT.

This sequence belongs to the GGGP/HepGP synthase family. Group II subfamily. Mg(2+) is required as a cofactor.

The protein localises to the cytoplasm. It catalyses the reaction sn-glycerol 1-phosphate + (2E,6E,10E)-geranylgeranyl diphosphate = sn-3-O-(geranylgeranyl)glycerol 1-phosphate + diphosphate. It participates in membrane lipid metabolism; glycerophospholipid metabolism. Its function is as follows. Prenyltransferase that catalyzes the transfer of the geranylgeranyl moiety of geranylgeranyl diphosphate (GGPP) to the C3 hydroxyl of sn-glycerol-1-phosphate (G1P). This reaction is the first ether-bond-formation step in the biosynthesis of archaeal membrane lipids. The protein is Geranylgeranylglyceryl phosphate synthase of Caldivirga maquilingensis (strain ATCC 700844 / DSM 13496 / JCM 10307 / IC-167).